Consider the following 147-residue polypeptide: Small ribosomal subunit protein uS12 (147 aa).

The protein belongs to the universal ribosomal protein uS12 family. In terms of assembly, part of the 30S ribosomal subunit.

With S4 and S5 plays an important role in translational accuracy. Located at the interface of the 30S and 50S subunits. The chain is Small ribosomal subunit protein uS12 from Methanococcus maripaludis (strain C7 / ATCC BAA-1331).